Consider the following 363-residue polypeptide: Pyrimidine monooxygenase RutA (363 aa).

Residues 49-50 (IK), asparagine 115, glutamate 124, 140-141 (RY), and serine 190 contribute to the FMN site.

This sequence belongs to the NtaA/SnaA/DszA monooxygenase family. RutA subfamily.

The enzyme catalyses uracil + FMNH2 + NADH + O2 = (Z)-3-ureidoacrylate + FMN + NAD(+) + H2O + H(+). It catalyses the reaction thymine + FMNH2 + NADH + O2 = (Z)-2-methylureidoacrylate + FMN + NAD(+) + H2O + H(+). Catalyzes the pyrimidine ring opening between N-3 and C-4 by an unusual flavin hydroperoxide-catalyzed mechanism, adding oxygen atoms in the process to yield ureidoacrylate peracid, that immediately reacts with FMN forming ureidoacrylate and FMN-N(5)-oxide. The FMN-N(5)-oxide reacts spontaneously with NADH to produce FMN. Requires the flavin reductase RutF to regenerate FMN in vivo. In Escherichia coli O103:H2 (strain 12009 / EHEC), this protein is Pyrimidine monooxygenase RutA.